The sequence spans 479 residues: uncharacterized protein (479 aa).

Residues 150 to 158 (TSGSTGKPK), Asp-360, Arg-375, and Lys-462 each bind ATP.

The protein belongs to the ATP-dependent AMP-binding enzyme family.

May be involved in fatty acid metabolism. This is an uncharacterized protein from Bacillus subtilis (strain 168).